An 86-amino-acid chain; its full sequence is Exodeoxyribonuclease 7 small subunit (86 aa).

The segment at 1-26 (MQDELFETEKAPQKNTKNAKNAPKKS) is disordered.

This sequence belongs to the XseB family. In terms of assembly, heterooligomer composed of large and small subunits.

The protein resides in the cytoplasm. It carries out the reaction Exonucleolytic cleavage in either 5'- to 3'- or 3'- to 5'-direction to yield nucleoside 5'-phosphates.. Bidirectionally degrades single-stranded DNA into large acid-insoluble oligonucleotides, which are then degraded further into small acid-soluble oligonucleotides. This is Exodeoxyribonuclease 7 small subunit from Helicobacter pylori (strain Shi470).